A 49-amino-acid chain; its full sequence is Large ribosomal subunit protein bL33B (49 aa).

It belongs to the bacterial ribosomal protein bL33 family.

The sequence is that of Large ribosomal subunit protein bL33B from Oceanobacillus iheyensis (strain DSM 14371 / CIP 107618 / JCM 11309 / KCTC 3954 / HTE831).